The sequence spans 1400 residues: Tensin-2 (1400 aa).

The Phorbol-ester/DAG-type zinc-finger motif lies at 31–79 (PHSFREKVFRKKTPVCAVCKVTIDGTGVSCRVCKVATHRKCEAKVTSSC). Position 91 is a phosphothreonine (T91). 2 positions are modified to phosphoserine: S118 and S120. The Phosphatase tensin-type domain occupies 122–294 (DPLMERRWDL…SYFSGLLSGS (173 aa)). Residue C231 is the Phosphocysteine intermediate of the active site. Residues 299–425 (SSPLFLHYVF…ASVEFVFSSS (127 aa)) enclose the C2 tensin-type domain. The interval 425–444 (SPEKVKGNTPRNDPSVSVDY) is disordered. Polar residues predominate over residues 433 to 444 (TPRNDPSVSVDY). S455 is modified (phosphoserine). At Y456 the chain carries Phosphotyrosine. S466 carries the phosphoserine modification. T474 bears the Phosphothreonine mark. The residue at position 481 (S481) is a Phosphoserine. At Y483 the chain carries Phosphotyrosine. The interval 488 to 536 (RVPRQTPPAPSPELPPPPMLSVSSDSGHSSTLTTEHTAESPGRPPPTAA) is disordered. Over residues 492-506 (QTPPAPSPELPPPPM) the composition is skewed to pro residues. R555 is subject to Omega-N-methylarginine. The disordered stretch occupies residues 809–1114 (CGSPSEGRGY…DVTQPPEHPL (306 aa)). Phosphoserine occurs at positions 820, 825, 830, 832, and 835. Polar residues-rich tracts occupy residues 898 to 917 (CSAS…SSPV) and 929 to 940 (TRSPSLAPTQRL). T909 carries the phosphothreonine modification. A phosphoserine mark is found at S931, S941, and S972. At T977 the chain carries Phosphothreonine. 2 positions are modified to phosphoserine: S991 and S1003. A compositionally biased stretch (pro residues) spans 1046 to 1056 (PEPPQSSPTPA). The span at 1082–1098 (SGQQPSPPARSTNQHVT) shows a compositional bias: polar residues. The residue at position 1087 (S1087) is a Phosphoserine. The 108-residue stretch at 1131–1238 (WYKPHLSRDQ…SLPCCLRIPS (108 aa)) folds into the SH2 domain. T1173 carries the post-translational modification Phosphothreonine. S1238 carries the post-translational modification Phosphoserine. The PTB domain occupies 1266–1399 (ACSVLYLTSV…FITKVLLGQR (134 aa)).

Belongs to the PTEN phosphatase protein family. Interacts with AXL. Interacts with SYK; leading to its phosphorylation. Interacts with SQSTM1 (via PB1 domain); the interaction leads to sequestration of TNS2 in cytoplasmic aggregates with SQSTM1 and promotes TNS2 ubiquitination and proteasomal degradation. Ubiquitinated following sequestration in cytoplasmic aggregates with SQSTM1, leading to proteasomal degradation. In terms of tissue distribution, in the adult kidney, expressed mainly in glomeruli (at protein level). In the newborn kidney, localizes on the basal surface of podocytes along the glomerular basement membrane and not in endothelial cells. Low expression levels in anabolic skeletal muscles.

It localises to the cell junction. It is found in the focal adhesion. The protein resides in the cell membrane. The protein localises to the cytoplasm. It carries out the reaction O-phospho-L-tyrosyl-[protein] + H2O = L-tyrosyl-[protein] + phosphate. In terms of biological role, tyrosine-protein phosphatase which regulates cell motility, proliferation and muscle-response to insulin. Phosphatase activity is mediated by binding to phosphatidylinositol-3,4,5-triphosphate (PtdIns(3,4,5)P3) via the SH2 domain. In muscles and under catabolic conditions, dephosphorylates IRS1 leading to its degradation and muscle atrophy. Negatively regulates PI3K-AKT pathway activation. Dephosphorylates nephrin NPHS1 in podocytes which affects mTORC1 complex activity. Under normal glucose conditions, NPHS1 outcompetes IRS1 for binding to phosphatidylinositol 3-kinase (PI3K) which balances mTORC1 activity but high glucose conditions lead to up-regulation of TNS2, increased NPHS1 dephosphorylation and activation of mTORC1, contributing to podocyte hypertrophy and proteinuria. Required for correct podocyte morphology, podocyte-glomerular basement membrane interaction and integrity of the glomerular filtration barrier. Enhances RHOA activation in the presence of DLC1. Plays a role in promoting DLC1-dependent remodeling of the extracellular matrix. In Mus musculus (Mouse), this protein is Tensin-2 (Tns2).